The chain runs to 101 residues: Urease subunit gamma (101 aa).

This sequence belongs to the urease gamma subunit family. In terms of assembly, heterotrimer of UreA (gamma), UreB (beta) and UreC (alpha) subunits. Three heterotrimers associate to form the active enzyme.

It is found in the cytoplasm. The enzyme catalyses urea + 2 H2O + H(+) = hydrogencarbonate + 2 NH4(+). Its pathway is nitrogen metabolism; urea degradation; CO(2) and NH(3) from urea (urease route): step 1/1. This Ureaplasma urealyticum (Ureaplasma urealyticum biotype 2) protein is Urease subunit gamma.